A 959-amino-acid polypeptide reads, in one-letter code: Kinesin-like protein NACK1 (959 aa).

Residues 1-28 (MTVRTPGTPASKIDKTPATTPNGHRGRE) are disordered. Positions 30-353 (KIVVTVRLRP…LYFATRAKEV (324 aa)) constitute a Kinesin motor domain. An ATP-binding site is contributed by 117-124 (GQTSSGKT). Residue Thr-145 is modified to Phosphothreonine. Residues 362–429 (VVSDKQLVKH…LRRKLQEEQG (68 aa)) are a coiled coil. Disordered regions lie at residues 417–438 (VDEL…SVSP), 451–473 (SPNL…GRQS), 598–640 (LPSN…FLKS), and 658–700 (NRAP…SVNM). Basic and acidic residues-rich tracts occupy residues 418-429 (DELRRKLQEEQG) and 454-466 (LEEK…ERTR). Residues 557–598 (KSVSANLKEEIARLHSQGSTIADLEEQLENVQKSLDKLVMSL) are a coiled coil. Low complexity predominate over residues 600–611 (SNNDQQSNNDTT). The segment covering 613-623 (KAKHPSKKKKL) has biased composition (basic residues). A compositionally biased stretch (polar residues) spans 630 to 640 (NSINRQNFLKS). 2 positions are modified to phosphothreonine: Thr-675 and Thr-690. The interval 685 to 756 (SSKEGTPYRR…EANEAAGYNL (72 aa)) is required for the binding to NPK1.

This sequence belongs to the TRAFAC class myosin-kinesin ATPase superfamily. Kinesin family. KIN-7 subfamily. In terms of assembly, interacts (via C-terminus) with NPK1 (via C-terminus). Phosphorylated at Thr-145, Thr-675 and Thr-690 by CDKAs and CDKBs. The phosphorylation occurs before metaphase and inhibits the interaction with NPK1 preventing the transition to cytokinesis.

The protein localises to the cytoplasm. It localises to the nucleus. It is found in the cytoskeleton. Its subcellular location is the phragmoplast. Its function is as follows. Probable plus end-directed motor protein that functions in the NACK-PQR (NPK1-NQK1/MEK1-NRK1) MAP kinase signaling pathway, which is essential for somatic cell cytokinesis, especially for the cell-plate formation and its expansion. Regulates the activity and the localization of NPK1 by association through the non-catalytic region of the kinase. The chain is Kinesin-like protein NACK1 (NACK1) from Nicotiana tabacum (Common tobacco).